A 131-amino-acid polypeptide reads, in one-letter code: Large ribosomal subunit protein bL17 (131 aa).

This sequence belongs to the bacterial ribosomal protein bL17 family. In terms of assembly, part of the 50S ribosomal subunit. Contacts protein L32.

This Shewanella amazonensis (strain ATCC BAA-1098 / SB2B) protein is Large ribosomal subunit protein bL17.